We begin with the raw amino-acid sequence, 334 residues long: DNA-directed RNA polymerase subunit alpha (334 aa).

The alpha N-terminal domain (alpha-NTD) stretch occupies residues 1-231 (MNMIKIEPYI…KQMSIFGVDL (231 aa)). The tract at residues 247–334 (ELKTLMIKID…NRKLAKLKSN (88 aa)) is alpha C-terminal domain (alpha-CTD).

It belongs to the RNA polymerase alpha chain family. In terms of assembly, homodimer. The RNAP catalytic core consists of 2 alpha, 1 beta/beta' and 1 omega subunit. When a sigma factor is associated with the core the holoenzyme is formed, which can initiate transcription.

It catalyses the reaction RNA(n) + a ribonucleoside 5'-triphosphate = RNA(n+1) + diphosphate. In terms of biological role, DNA-dependent RNA polymerase catalyzes the transcription of DNA into RNA using the four ribonucleoside triphosphates as substrates. This Helicobacter hepaticus (strain ATCC 51449 / 3B1) protein is DNA-directed RNA polymerase subunit alpha.